The following is a 235-amino-acid chain: MVFNVNILTIFPEMFPGTLGYSVIGKALNKGIWNLNVIDIRSFATDKHKTVDDKPYGGGPGMIMKADVIGSAIDNVLSTNKETKLIYMSPSGVKLNQDISGQLAHFSNITILCGRFEGIDRRVLDFYDFYEISIGDYILSGGEVASMVLIETCVRLIPGVVSNVDSIRDESFTASYGLEYSQYTRPANWRGLEVPSVLVSGNHKKINLWKTQQSYRITKQRRPELTNTADGDIYE.

S-adenosyl-L-methionine-binding positions include Gly114 and 134–139; that span reads IGDYIL.

It belongs to the RNA methyltransferase TrmD family. Homodimer.

The protein resides in the cytoplasm. It catalyses the reaction guanosine(37) in tRNA + S-adenosyl-L-methionine = N(1)-methylguanosine(37) in tRNA + S-adenosyl-L-homocysteine + H(+). Specifically methylates guanosine-37 in various tRNAs. The chain is tRNA (guanine-N(1)-)-methyltransferase from Ehrlichia ruminantium (strain Welgevonden).